We begin with the raw amino-acid sequence, 238 residues long: MKLPNEIDEYLASRNFSENTRSNYHYDLVSLQAFFEDKSLTTENLELYKIQISNLSPAAQRRKISSANQYLLFLYQRQKVDQYFKIKQVVQKKSQTAQSYHPMIKEFPEFYGPLTCPGQFLALLILEFGLNFAEIQKLKWENFNWNFKYLTIEKAGIKRVLPIREKFAIRVKAINNADELFAKSRQFLYTELKKFTNYSSKEIREQYILHQVKAGKSIYELATLLGLTTITTLEKYYR.

The Core-binding (CB) domain maps to 1–75 (MKLPNEIDEY…SANQYLLFLY (75 aa)). The 149-residue stretch at 90–238 (VQKKSQTAQS…TITTLEKYYR (149 aa)) folds into the Tyr recombinase domain. Catalysis depends on residues Lys-154 and Arg-204. The O-(3'-phospho-DNA)-tyrosine intermediate role is filled by Tyr-236.

Belongs to the 'phage' integrase family. XerD-like subfamily.

The protein resides in the cytoplasm. Putative tyrosine recombinase. Not involved in the cutting and rejoining of the recombining DNA molecules on dif(SL) site. The polypeptide is Tyrosine recombinase XerD-like (ynbA) (Lactococcus lactis subsp. lactis (strain IL1403) (Streptococcus lactis)).